Here is a 362-residue protein sequence, read N- to C-terminus: Peptide chain release factor 1 (362 aa).

An N5-methylglutamine modification is found at glutamine 237.

This sequence belongs to the prokaryotic/mitochondrial release factor family. In terms of processing, methylated by PrmC. Methylation increases the termination efficiency of RF1.

The protein resides in the cytoplasm. Peptide chain release factor 1 directs the termination of translation in response to the peptide chain termination codons UAG and UAA. This Marinomonas sp. (strain MWYL1) protein is Peptide chain release factor 1.